A 176-amino-acid chain; its full sequence is MNGDEDWLTVGKVVAAQGMQGELRINPSSDFPERFTLPGQRWLKERNGEPRPIELLTGRQLPGRSLYVVKFAGVNNRNAAEALVGQKLLVPSSDRPSLAEGEFHLLDLVGLEARLQAEGPAIGHVIDLTTAGNDLLEIELLTGRRVLVPFVEAIVPEVQLNQGWLRLTPPPGLLEL.

Residues 100–173 (EGEFHLLDLV…WLRLTPPPGL (74 aa)) enclose the PRC barrel domain.

The protein belongs to the RimM family. In terms of assembly, binds ribosomal protein uS19.

It localises to the cytoplasm. An accessory protein needed during the final step in the assembly of 30S ribosomal subunit, possibly for assembly of the head region. Essential for efficient processing of 16S rRNA. May be needed both before and after RbfA during the maturation of 16S rRNA. It has affinity for free ribosomal 30S subunits but not for 70S ribosomes. The chain is Ribosome maturation factor RimM from Prochlorococcus marinus (strain MIT 9313).